A 261-amino-acid polypeptide reads, in one-letter code: 1-(5-phosphoribosyl)-5-[(5-phosphoribosylamino)methylideneamino] imidazole-4-carboxamide isomerase (261 aa).

Asp-7 acts as the Proton acceptor in catalysis. Asp-129 acts as the Proton donor in catalysis.

The protein belongs to the HisA/HisF family.

The protein resides in the cytoplasm. The catalysed reaction is 1-(5-phospho-beta-D-ribosyl)-5-[(5-phospho-beta-D-ribosylamino)methylideneamino]imidazole-4-carboxamide = 5-[(5-phospho-1-deoxy-D-ribulos-1-ylimino)methylamino]-1-(5-phospho-beta-D-ribosyl)imidazole-4-carboxamide. It participates in amino-acid biosynthesis; L-histidine biosynthesis; L-histidine from 5-phospho-alpha-D-ribose 1-diphosphate: step 4/9. The polypeptide is 1-(5-phosphoribosyl)-5-[(5-phosphoribosylamino)methylideneamino] imidazole-4-carboxamide isomerase (Colwellia psychrerythraea (strain 34H / ATCC BAA-681) (Vibrio psychroerythus)).